The sequence spans 686 residues: Methionine--tRNA ligase (686 aa).

The 'HIGH' region signature appears at 15–25; it reads PYANGPIHLGH. Zn(2+) is bound by residues Cys-146, Cys-149, Cys-159, and Cys-162. The short motif at 331 to 335 is the 'KMSKS' region element; it reads KMSKS. Lys-334 lines the ATP pocket. One can recognise a tRNA-binding domain in the interval 584-686; it reads DFAKIDLRVA…AGVKAGSRVM (103 aa).

This sequence belongs to the class-I aminoacyl-tRNA synthetase family. MetG type 1 subfamily. Homodimer. Zn(2+) is required as a cofactor.

It is found in the cytoplasm. The enzyme catalyses tRNA(Met) + L-methionine + ATP = L-methionyl-tRNA(Met) + AMP + diphosphate. Its function is as follows. Is required not only for elongation of protein synthesis but also for the initiation of all mRNA translation through initiator tRNA(fMet) aminoacylation. This is Methionine--tRNA ligase from Mannheimia succiniciproducens (strain KCTC 0769BP / MBEL55E).